The primary structure comprises 404 residues: Argininosuccinate synthase (404 aa).

Residue 15–23 participates in ATP binding; that stretch reads AYSGGLDTS. Position 94 (Tyr-94) interacts with L-citrulline. Gly-124 serves as a coordination point for ATP. Residues Thr-126, Asn-130, and Asp-131 each contribute to the L-aspartate site. Residue Asn-130 participates in L-citrulline binding. L-citrulline is bound by residues Arg-134, Ser-182, Glu-266, and Tyr-278.

This sequence belongs to the argininosuccinate synthase family. Type 1 subfamily. In terms of assembly, homotetramer.

It is found in the cytoplasm. It catalyses the reaction L-citrulline + L-aspartate + ATP = 2-(N(omega)-L-arginino)succinate + AMP + diphosphate + H(+). It participates in amino-acid biosynthesis; L-arginine biosynthesis; L-arginine from L-ornithine and carbamoyl phosphate: step 2/3. This chain is Argininosuccinate synthase, found in Streptomyces avermitilis (strain ATCC 31267 / DSM 46492 / JCM 5070 / NBRC 14893 / NCIMB 12804 / NRRL 8165 / MA-4680).